Reading from the N-terminus, the 90-residue chain is Small ribosomal subunit protein uS17 (90 aa).

Belongs to the universal ribosomal protein uS17 family. In terms of assembly, part of the 30S ribosomal subunit.

Its function is as follows. One of the primary rRNA binding proteins, it binds specifically to the 5'-end of 16S ribosomal RNA. The sequence is that of Small ribosomal subunit protein uS17 from Methylobacillus flagellatus (strain ATCC 51484 / DSM 6875 / VKM B-1610 / KT).